A 197-amino-acid chain; its full sequence is Probable GTP-binding protein EngB (197 aa).

Residues 22 to 197 (TGVEVAFAGR…LKEKLDIWYQ (176 aa)) enclose the EngB-type G domain. GTP is bound by residues 30–37 (GRSNAGKS), 57–61 (GRTQL), 75–78 (DLPG), 142–145 (TKAD), and 177–179 (FSS). Mg(2+) contacts are provided by serine 37 and threonine 59.

The protein belongs to the TRAFAC class TrmE-Era-EngA-EngB-Septin-like GTPase superfamily. EngB GTPase family. Requires Mg(2+) as cofactor.

In terms of biological role, necessary for normal cell division and for the maintenance of normal septation. This is Probable GTP-binding protein EngB from Francisella philomiragia subsp. philomiragia (strain ATCC 25017 / CCUG 19701 / FSC 153 / O#319-036).